A 241-amino-acid polypeptide reads, in one-letter code: MHATELNTGHGSQRAIRLAPSILSADFARLGEEVCAIEAGGADLVHFDVMDNHYVPNLTIGPLVCEAIRPLVSIPIDVHLMVEPVDALIPLFAKAGANIISFHPEASRHVDRTIGLIRDHGCKAGLVLNPATPLGWLDHTLDQLDLVLLMSVNPGFGGQAFIPGVLDKVRQARARIDRQVDAGGRPVWLEIDGGVKADNIAAIARAGADTFVAGSAVFGAPDADGGYSSILYRLREAATVT.

Serine 21 is a substrate binding site. Positions 46, 48, and 79 each coordinate a divalent metal cation. The Proton acceptor role is filled by aspartate 48. Substrate contacts are provided by residues histidine 79, glycine 155–glycine 158, aspartate 192–glycine 194, and glycine 214–serine 215. Residue aspartate 192 coordinates a divalent metal cation. Aspartate 192 (proton donor) is an active-site residue.

This sequence belongs to the ribulose-phosphate 3-epimerase family. Requires a divalent metal cation as cofactor.

It carries out the reaction D-ribulose 5-phosphate = D-xylulose 5-phosphate. It functions in the pathway carbohydrate degradation. In terms of biological role, catalyzes the reversible epimerization of D-ribulose 5-phosphate to D-xylulose 5-phosphate. This chain is Ribulose-phosphate 3-epimerase 1, found in Cupriavidus necator (strain ATCC 17699 / DSM 428 / KCTC 22496 / NCIMB 10442 / H16 / Stanier 337) (Ralstonia eutropha).